A 431-amino-acid chain; its full sequence is UDP-N-acetylmuramate--L-alanine ligase (431 aa).

ATP is bound at residue 108-114 (GAHGKST).

It belongs to the MurCDEF family.

The protein resides in the cytoplasm. The enzyme catalyses UDP-N-acetyl-alpha-D-muramate + L-alanine + ATP = UDP-N-acetyl-alpha-D-muramoyl-L-alanine + ADP + phosphate + H(+). Its pathway is cell wall biogenesis; peptidoglycan biosynthesis. Cell wall formation. The polypeptide is UDP-N-acetylmuramate--L-alanine ligase (Campylobacter jejuni subsp. doylei (strain ATCC BAA-1458 / RM4099 / 269.97)).